Here is a 382-residue protein sequence, read N- to C-terminus: D-galactonate dehydratase (382 aa).

Asp183 is a binding site for Mg(2+). His185 acts as the Proton donor in catalysis. 2 residues coordinate Mg(2+): Glu209 and Glu235. Catalysis depends on His285, which acts as the Proton acceptor.

Belongs to the mandelate racemase/muconate lactonizing enzyme family. GalD subfamily. It depends on Mg(2+) as a cofactor.

The enzyme catalyses D-galactonate = 2-dehydro-3-deoxy-D-galactonate + H2O. The protein operates within carbohydrate acid metabolism; D-galactonate degradation; D-glyceraldehyde 3-phosphate and pyruvate from D-galactonate: step 1/3. In terms of biological role, catalyzes the dehydration of D-galactonate to 2-keto-3-deoxy-D-galactonate. The protein is D-galactonate dehydratase of Escherichia coli O9:H4 (strain HS).